The sequence spans 505 residues: Lysine--tRNA ligase (505 aa).

E415 and E422 together coordinate Mg(2+).

It belongs to the class-II aminoacyl-tRNA synthetase family. As to quaternary structure, homodimer. It depends on Mg(2+) as a cofactor.

The protein localises to the cytoplasm. The enzyme catalyses tRNA(Lys) + L-lysine + ATP = L-lysyl-tRNA(Lys) + AMP + diphosphate. The sequence is that of Lysine--tRNA ligase from Edwardsiella ictaluri (strain 93-146).